We begin with the raw amino-acid sequence, 432 residues long: Adenylosuccinate synthetase (432 aa).

Residues 13–19 and 41–43 contribute to the GTP site; these read GDEGKGK and GHT. Residue Asp-14 is the Proton acceptor of the active site. 2 residues coordinate Mg(2+): Asp-14 and Gly-41. Residues 14 to 17, 39 to 42, Thr-130, Arg-144, Gln-225, Thr-240, and Arg-304 each bind IMP; these read DEGK and NAGH. Catalysis depends on His-42, which acts as the Proton donor. 300–306 provides a ligand contact to substrate; that stretch reads AVTGRPR. Residues Arg-306, 332-334, and 415-417 contribute to the GTP site; these read KLD and STG.

It belongs to the adenylosuccinate synthetase family. Homodimer. It depends on Mg(2+) as a cofactor.

The protein localises to the cytoplasm. The catalysed reaction is IMP + L-aspartate + GTP = N(6)-(1,2-dicarboxyethyl)-AMP + GDP + phosphate + 2 H(+). It functions in the pathway purine metabolism; AMP biosynthesis via de novo pathway; AMP from IMP: step 1/2. Its function is as follows. Plays an important role in the de novo pathway of purine nucleotide biosynthesis. Catalyzes the first committed step in the biosynthesis of AMP from IMP. This is Adenylosuccinate synthetase from Pasteurella multocida (strain Pm70).